The following is a 316-amino-acid chain: HPr kinase/phosphorylase (316 aa).

Residues histidine 146 and lysine 167 contribute to the active site. 161 to 168 provides a ligand contact to ATP; it reads GESGLGKS. Residue serine 168 participates in Mg(2+) binding. Catalysis depends on aspartate 185, which acts as the Proton acceptor; for phosphorylation activity. Proton donor; for dephosphorylation activity. The interval 209-218 is important for the catalytic mechanism of both phosphorylation and dephosphorylation; sequence LEVRGIGLLD. Glutamate 210 is a Mg(2+) binding site. Arginine 252 is a catalytic residue. The important for the catalytic mechanism of dephosphorylation stretch occupies residues 273–278; it reads QVEAGR.

The protein belongs to the HPrK/P family. In terms of assembly, homohexamer. Requires Mg(2+) as cofactor.

The catalysed reaction is [HPr protein]-L-serine + ATP = [HPr protein]-O-phospho-L-serine + ADP + H(+). It carries out the reaction [HPr protein]-O-phospho-L-serine + phosphate + H(+) = [HPr protein]-L-serine + diphosphate. In terms of biological role, catalyzes the ATP- as well as the pyrophosphate-dependent phosphorylation of a specific serine residue in HPr, a phosphocarrier protein of the phosphoenolpyruvate-dependent sugar phosphotransferase system (PTS). HprK/P also catalyzes the pyrophosphate-producing, inorganic phosphate-dependent dephosphorylation (phosphorolysis) of seryl-phosphorylated HPr (P-Ser-HPr). The sequence is that of HPr kinase/phosphorylase from Polaromonas naphthalenivorans (strain CJ2).